The sequence spans 156 residues: Small ribosomal subunit protein uS7 (156 aa).

It belongs to the universal ribosomal protein uS7 family. In terms of assembly, part of the 30S ribosomal subunit. Contacts proteins S9 and S11.

Its function is as follows. One of the primary rRNA binding proteins, it binds directly to 16S rRNA where it nucleates assembly of the head domain of the 30S subunit. Is located at the subunit interface close to the decoding center, probably blocks exit of the E-site tRNA. This is Small ribosomal subunit protein uS7 from Mycobacterium avium (strain 104).